The following is a 254-amino-acid chain: MYPVITVPAFNDNYIWLIRHENHCLVVDPGDAEPVLERLAALDLQLDAILLTHHHHDHVGGVTALLGHFPHARLYGPKLDPMPAHHGQWLDDGDQINWHGLSLEVIHVPGHTHGHIAYYGHGMLFCGDTLFSAGCGRLFEGTPAQMHASLQRLAALPDDTLIYCAHEYTLSNLRFAYAVEPDNHAIQQRIGLISKLRQQGLPSLPSRLGDEREFNVFLRCEQDSVKFSAEKHALKCLENPEDTFTVLRSWKDVF.

Zn(2+)-binding residues include His53, His55, Asp57, His58, His111, Asp128, and His166.

This sequence belongs to the metallo-beta-lactamase superfamily. Glyoxalase II family. As to quaternary structure, monomer. Requires Zn(2+) as cofactor.

The catalysed reaction is an S-(2-hydroxyacyl)glutathione + H2O = a 2-hydroxy carboxylate + glutathione + H(+). It functions in the pathway secondary metabolite metabolism; methylglyoxal degradation; (R)-lactate from methylglyoxal: step 2/2. Functionally, thiolesterase that catalyzes the hydrolysis of S-D-lactoyl-glutathione to form glutathione and D-lactic acid. The polypeptide is Hydroxyacylglutathione hydrolase (Aeromonas hydrophila subsp. hydrophila (strain ATCC 7966 / DSM 30187 / BCRC 13018 / CCUG 14551 / JCM 1027 / KCTC 2358 / NCIMB 9240 / NCTC 8049)).